The following is a 411-amino-acid chain: Peptidase T (411 aa).

A Zn(2+)-binding site is contributed by His-78. Residue Asp-80 is part of the active site. Asp-140 provides a ligand contact to Zn(2+). The Proton acceptor role is filled by Glu-173. Glu-174, Asp-196, and His-379 together coordinate Zn(2+).

The protein belongs to the peptidase M20B family. Zn(2+) is required as a cofactor.

Its subcellular location is the cytoplasm. The enzyme catalyses Release of the N-terminal residue from a tripeptide.. In terms of biological role, cleaves the N-terminal amino acid of tripeptides. In Yersinia pestis bv. Antiqua (strain Antiqua), this protein is Peptidase T.